Reading from the N-terminus, the 591-residue chain is L-fucose isomerase (591 aa).

Catalysis depends on proton acceptor residues Glu-337 and Asp-361. Mn(2+) contacts are provided by Glu-337, Asp-361, and His-528.

Belongs to the L-fucose isomerase family. In terms of assembly, homohexamer. Mn(2+) serves as cofactor.

The protein resides in the cytoplasm. It catalyses the reaction L-fucose = L-fuculose. It functions in the pathway carbohydrate degradation; L-fucose degradation; L-lactaldehyde and glycerone phosphate from L-fucose: step 1/3. Converts the aldose L-fucose into the corresponding ketose L-fuculose. The polypeptide is L-fucose isomerase (Escherichia coli (strain 55989 / EAEC)).